The primary structure comprises 237 residues: Uracil-DNA glycosylase (237 aa).

Residue aspartate 77 is the Proton acceptor of the active site.

It belongs to the uracil-DNA glycosylase (UDG) superfamily. UNG family.

It localises to the cytoplasm. The enzyme catalyses Hydrolyzes single-stranded DNA or mismatched double-stranded DNA and polynucleotides, releasing free uracil.. Its function is as follows. Excises uracil residues from the DNA which can arise as a result of misincorporation of dUMP residues by DNA polymerase or due to deamination of cytosine. This Acinetobacter baumannii (strain SDF) protein is Uracil-DNA glycosylase.